The sequence spans 776 residues: Venom dipeptidyl peptidase 4 (776 aa).

Positions 1 to 19 (MVPLRSFVLLNGLFFVLLA) are cleaved as a signal peptide. N-linked (GlcNAc...) asparagine glycosylation is found at asparagine 44, asparagine 66, and asparagine 329. 2 cysteine pairs are disulfide-bonded: cysteine 449/cysteine 452 and cysteine 462/cysteine 480. N-linked (GlcNAc...) asparagine glycans are attached at residues asparagine 504 and asparagine 577. Serine 638 functions as the Charge relay system in the catalytic mechanism. Cysteine 658 and cysteine 769 are disulfide-bonded. Asparagine 693 carries an N-linked (GlcNAc...) asparagine glycan. Active-site charge relay system residues include aspartate 717 and histidine 749.

The protein belongs to the peptidase S9B family. DPPIV subfamily. In terms of tissue distribution, expressed by the venom gland.

The protein resides in the secreted. It catalyses the reaction Release of an N-terminal dipeptide, Xaa-Yaa-|-Zaa-, from a polypeptide, preferentially when Yaa is Pro, provided Zaa is neither Pro nor hydroxyproline.. In terms of biological role, venom dipeptidyl-peptidase which removes N-terminal dipeptides sequentially from polypeptides having unsubstituted N-termini provided that the penultimate residue is proline. May process venom proteins into their active forms and/or modulate the chemotactic activity of immune cells after the insect sting. The chain is Venom dipeptidyl peptidase 4 from Vespa velutina (Asian yellow-legged hornet).